Consider the following 198-residue polypeptide: Inner membrane-spanning protein YciB (198 aa).

Helical transmembrane passes span 36 to 56 (IFSA…ILYI), 67 to 87 (LTLV…SETF), 90 to 110 (WKAP…HFIG), 133 to 153 (LNIA…YVAF), and 162 to 182 (FKVF…GIYL).

It belongs to the YciB family.

The protein resides in the cell inner membrane. Its function is as follows. Plays a role in cell envelope biogenesis, maintenance of cell envelope integrity and membrane homeostasis. In Pseudomonas syringae pv. tomato (strain ATCC BAA-871 / DC3000), this protein is Inner membrane-spanning protein YciB.